The following is a 281-amino-acid chain: Ribosomal protein L11 methyltransferase (281 aa).

The S-adenosyl-L-methionine site is built by threonine 133, glycine 154, aspartate 175, and asparagine 216.

It belongs to the methyltransferase superfamily. PrmA family.

The protein localises to the cytoplasm. The enzyme catalyses L-lysyl-[protein] + 3 S-adenosyl-L-methionine = N(6),N(6),N(6)-trimethyl-L-lysyl-[protein] + 3 S-adenosyl-L-homocysteine + 3 H(+). In terms of biological role, methylates ribosomal protein L11. In Campylobacter jejuni subsp. jejuni serotype O:6 (strain 81116 / NCTC 11828), this protein is Ribosomal protein L11 methyltransferase.